A 208-amino-acid chain; its full sequence is Superoxide dismutase [Mn] 2 (208 aa).

Mn(2+) contacts are provided by histidine 28, histidine 83, aspartate 165, and histidine 169.

Belongs to the iron/manganese superoxide dismutase family. In terms of assembly, homodimer. The cofactor is Mn(2+).

The enzyme catalyses 2 superoxide + 2 H(+) = H2O2 + O2. In terms of biological role, destroys superoxide anion radicals which are normally produced within the cells and which are toxic to biological systems. The protein is Superoxide dismutase [Mn] 2 (sodA2) of Bacillus cereus (strain ATCC 14579 / DSM 31 / CCUG 7414 / JCM 2152 / NBRC 15305 / NCIMB 9373 / NCTC 2599 / NRRL B-3711).